A 355-amino-acid chain; its full sequence is Transcription factor TCP13 (355 aa).

The segment at 1-57 (MNIVSWKDANDEVAGGATTRREREVKEDQEETEVRATSGKTVIKKQPTSISSSSSSW) is disordered. The TCP domain maps to 74 to 132 (GKDRHSKVCTLRGLRDRRVRLSVPTAIQLYDLQERLGVDQPSKAVDWLLDAAKEEIDEL). The disordered stretch occupies residues 329–355 (TNSTTTANMSRHLGSERCTSRGSDHHM). Basic and acidic residues predominate over residues 341–355 (LGSERCTSRGSDHHM).

In terms of assembly, interacts with AHL27 and AHL29. Interacts with SPL. Interacts with KIN10; KIN11 and FLZ3. As to expression, expressed in cotyledons, particularly in the vascular region, in leaves, buds, flowers and immature siliques, and, to a lower extent, in roots.

It is found in the nucleus. The protein localises to the plastid. The protein resides in the chloroplast. In terms of biological role, plays a pivotal role in the control of morphogenesis of shoot organs by negatively regulating the expression of boundary-specific genes such as CUC genes, probably through the induction of miRNA (e.g. miR164). Binds to the 3'-ACC-5' repeats in the light-responsive promoter (LRP) of psbD, and activates its transcription. Participates in ovule development. The protein is Transcription factor TCP13 (TCP13) of Arabidopsis thaliana (Mouse-ear cress).